The sequence spans 493 residues: Glutamate--tRNA ligase (493 aa).

The 'HIGH' region motif lies at 10-20; sequence PSPTGDPHVGT. The 'KMSKS' region signature appears at 251-255; that stretch reads KLSKR. Lysine 254 serves as a coordination point for ATP.

It belongs to the class-I aminoacyl-tRNA synthetase family. Glutamate--tRNA ligase type 1 subfamily. Monomer.

It is found in the cytoplasm. The catalysed reaction is tRNA(Glu) + L-glutamate + ATP = L-glutamyl-tRNA(Glu) + AMP + diphosphate. Its function is as follows. Catalyzes the attachment of glutamate to tRNA(Glu) in a two-step reaction: glutamate is first activated by ATP to form Glu-AMP and then transferred to the acceptor end of tRNA(Glu). This is Glutamate--tRNA ligase from Pseudomonas syringae pv. syringae (strain B728a).